Consider the following 183-residue polypeptide: Dual-action ribosomal maturation protein DarP (183 aa).

This sequence belongs to the DarP family.

It localises to the cytoplasm. Its function is as follows. Member of a network of 50S ribosomal subunit biogenesis factors which assembles along the 30S-50S interface, preventing incorrect 23S rRNA structures from forming. Promotes peptidyl transferase center (PTC) maturation. The sequence is that of Dual-action ribosomal maturation protein DarP from Escherichia coli O7:K1 (strain IAI39 / ExPEC).